Reading from the N-terminus, the 977-residue chain is Myb-like protein I (977 aa).

The disordered stretch occupies residues 1-122 (MMNNQSMVRY…QQQQQQLDKS (122 aa)). The span at 21–39 (PSPPVYSPIYRSPPPPPQP) shows a compositional bias: pro residues. Residues 52 to 68 (DNSHHQVMDNSDHEQQQ) show a composition bias toward basic and acidic residues. Residues 75–118 (QQQQQQQHHHQQQQQQQHHQQQQQQHHQQQQQHHHQQQQQQQQQ) show a composition bias toward low complexity. The HTH myb-type domain occupies 167 to 222 (EKKKQSRYWTPEEHSRFIEALSKYGHKDVKSISQYVSTRNPTQVRTHAQKYFLRID). A DNA-binding region (H-T-H motif) is located at residues 195-218 (VKSISQYVSTRNPTQVRTHAQKYF). 5 disordered regions span residues 229–331 (LESK…SSPL), 422–516 (INNN…SSQP), 531–650 (NNNN…QQQM), 738–853 (LNSN…WPGP), and 872–960 (NYVP…GMNQ). The segment covering 241 to 252 (KDDDWLREEYND) has biased composition (acidic residues). Residues 254 to 275 (GSPTQYSSCSNSPTTNSVANPF) are compositionally biased toward polar residues. 2 stretches are compositionally biased toward low complexity: residues 276-329 (SNSL…GNSS) and 422-504 (INNN…INNN). The span at 505–516 (GPNSPNLLSSQP) shows a compositional bias: polar residues. Residues 738–754 (LNSNSGNSSPNISSING) show a composition bias toward low complexity. Positions 783–797 (LSGSPSHSPAQSPHY) are enriched in polar residues. Composition is skewed to low complexity over residues 798–848 (NLNN…SHSI) and 887–943 (SPHF…GSGS). A compositionally biased stretch (polar residues) spans 944 to 960 (WHQYQATDSPTGWGMNQ).

Its subcellular location is the nucleus. The sequence is that of Myb-like protein I (mybI) from Dictyostelium discoideum (Social amoeba).